Consider the following 985-residue polypeptide: Invasin (985 aa).

The D1 stretch occupies residues 494–594; sequence SVTVQQPQLT…RQSVDTHFVK (101 aa). Topologically, residues 494 to 985 are extracellular; sequence SVTVQQPQLT…LAFPLCALAI (492 aa). Big-1 domains lie at 503–594 and 601–691; these read TLTA…HFVK and KSTL…VNFT. Residues 595 to 694 form a D2 region; the sequence is GTIAADKSTL…SVTVNFTADP (100 aa). Positions 695–794 are D3; that stretch reads IPDAGRSSFT…LQKKISLFPV (100 aa). The segment at 795–886 is D4; sequence PTLTGILVNG…YSVSYRFYPN (92 aa). The interval 795 to 985 is integrin-binding; the sequence is PTLTGILVNG…LAFPLCALAI (191 aa). The tract at residues 887-985 is D5; it reads RWIYDGGTSL…LAFPLCALAI (99 aa). An intrachain disulfide couples cysteine 906 to cysteine 981.

Belongs to the intimin/invasin family.

It localises to the cell surface. Functionally, invasin is a protein that allows enteric bacteria to penetrate cultured mammalian cells. The entry of invasin in the cell is mediated by binding several beta-1 chain integrins. In Yersinia pseudotuberculosis serotype I (strain IP32953), this protein is Invasin.